The primary structure comprises 919 residues: Valine--tRNA ligase (919 aa).

The 'HIGH' region motif lies at 66 to 76; it reads PNVTGQLHMGH. Residues 562–566 carry the 'KMSKS' region motif; the sequence is KMSKS. K565 contacts ATP. Positions 852–919 form a coiled coil; sequence TVDKEAERKR…RISARLEELK (68 aa).

It belongs to the class-I aminoacyl-tRNA synthetase family. ValS type 1 subfamily. As to quaternary structure, monomer.

It is found in the cytoplasm. It catalyses the reaction tRNA(Val) + L-valine + ATP = L-valyl-tRNA(Val) + AMP + diphosphate. In terms of biological role, catalyzes the attachment of valine to tRNA(Val). As ValRS can inadvertently accommodate and process structurally similar amino acids such as threonine, to avoid such errors, it has a 'posttransfer' editing activity that hydrolyzes mischarged Thr-tRNA(Val) in a tRNA-dependent manner. In Corynebacterium diphtheriae (strain ATCC 700971 / NCTC 13129 / Biotype gravis), this protein is Valine--tRNA ligase.